A 456-amino-acid polypeptide reads, in one-letter code: Senecionine N-oxygenase (456 aa).

The first 22 residues, 1–22 (MFRKFVIMLVLSLLVAAGISQA), serve as a signal peptide directing secretion. 32–37 (GAGYSG) lines the FAD pocket. 215–220 (GAGPSG) contacts NADP(+).

The protein belongs to the FMO family. As to quaternary structure, homotetramer. Requires FAD as cofactor. As to expression, hemolymph.

The protein resides in the secreted. The enzyme catalyses senecionine + NADPH + O2 = senecionine N-oxide + NADP(+) + H2O. In terms of biological role, NADPH-dependent monooxygenase that detoxifies senecionine and similar plant alkaloids that are ingested by the larvae. Is active towards a narrow range of related substrates with highest activity towards senecionine, followed by seneciphylline, retrorsine, monocrotaline, senecivernine, axillarine and axillaridine. The sequence is that of Senecionine N-oxygenase (sno1) from Tyria jacobaeae (Cinnabar moth).